The sequence spans 1076 residues: Enhancer of mRNA-decapping protein 4-like protein pdc1 (1076 aa).

Composition is skewed to low complexity over residues 1 to 19 (MNEQ…LPNL) and 53 to 69 (SSLL…SNQS). Disordered stretches follow at residues 1–82 (MNEQ…ASHS), 95–127 (GAKP…FNPV), and 139–204 (STGP…AEEQ). Polar residues predominate over residues 70–82 (PSNSGPKYYASHS). The span at 153-173 (NDSQDTAFQSSRNMPSDTSVA) shows a compositional bias: polar residues. Positions 174 to 184 (SPDYSHSQSSS) are enriched in low complexity. Residues 185 to 195 (PIANYQESGNS) show a composition bias toward polar residues. WD repeat units follow at residues 292 to 334 (NSPN…STSE) and 402 to 441 (DTGI…PSTP). Disordered stretches follow at residues 666-714 (RHST…SPSS) and 892-934 (TAPD…PAQG). The span at 669–688 (TASPSTVNSGFSTPRSQATG) shows a compositional bias: polar residues. Ser671 and Ser673 each carry phosphoserine. Residue Thr674 is modified to Phosphothreonine. Over residues 695–706 (DKGERFETKDKS) the composition is skewed to basic and acidic residues. The segment at 789 to 1076 (MQVALKEEIA…ISEISVASSN (288 aa)) is interaction with dcp2. The residue at position 1075 (Ser1075) is a Phosphoserine.

Belongs to the WD repeat EDC4 family. In terms of assembly, interacts with dcp2; via C-terminus.

Its subcellular location is the cytoplasm. It is found in the P-body. Involved in P-body formation. Acts as a functional homolog of human EDC4, which plays a role in mRNA decapping in the process of mRNA degradation. Enhances the decapping activity of dcp2. Together with edc3, acts as a scaffolding protein sufficient for the phase transition of the components of the 5' to 3' mRNA degradation machinery to form P-bodies. Intermolecular interactions between the edc3 Sm domain and at least 10 helical leucine-rich motifs in dcp2 and pdc1 build the core of the interaction network of this spontaneous clustering process. In Schizosaccharomyces pombe (strain 972 / ATCC 24843) (Fission yeast), this protein is Enhancer of mRNA-decapping protein 4-like protein pdc1.